A 118-amino-acid polypeptide reads, in one-letter code: Vitelline membrane protein Vm32E (118 aa).

The first 17 residues, 1–17, serve as a signal peptide directing secretion; sequence MKIVALTLVAFVALAGA. The VM domain maps to 36 to 75; the sequence is GYPAPPCPTNYLFSCQPNLAPAPCAQEAQAPAYGSAGAYT.

The protein belongs to the vitelline membrane family.

It is found in the secreted. Its function is as follows. Major early eggshell protein. The protein is Vitelline membrane protein Vm32E of Drosophila mauritiana (Fruit fly).